A 65-amino-acid chain; its full sequence is Cell death protein rpr (65 aa).

As to quaternary structure, interacts with Diap2 (via BIR2 domain).

Its function is as follows. Activator of apoptosis, as well as grim and hid, that acts on the effector Dredd. The polypeptide is Cell death protein rpr (rpr) (Drosophila melanogaster (Fruit fly)).